A 460-amino-acid chain; its full sequence is Chromosomal replication initiator protein DnaA (460 aa).

The interval 1–91 is domain I, interacts with DnaA modulators; sequence MNLTSPKVST…SLWQSEDKSI (91 aa). The interval 91-122 is domain II; the sequence is IRSIDIQVIEERNSNFNVILKNREESNHNLGS. Residues 123–342 form a domain III, AAA+ region region; sequence PLDPRFTFDN…GALNKVTHTS (220 aa). Residues Gly-169, Gly-171, Lys-172, and Thr-173 each coordinate ATP. The domain IV, binds dsDNA stretch occupies residues 343–460; sequence LIGRSMTVES…EINRLKKMFK (118 aa).

The protein belongs to the DnaA family. In terms of assembly, oligomerizes as a right-handed, spiral filament on DNA at oriC.

Its subcellular location is the cytoplasm. Functionally, plays an essential role in the initiation and regulation of chromosomal replication. ATP-DnaA binds to the origin of replication (oriC) to initiate formation of the DNA replication initiation complex once per cell cycle. Binds the DnaA box (a 9 base pair repeat at the origin) and separates the double-stranded (ds)DNA. Forms a right-handed helical filament on oriC DNA; dsDNA binds to the exterior of the filament while single-stranded (ss)DNA is stabiized in the filament's interior. The ATP-DnaA-oriC complex binds and stabilizes one strand of the AT-rich DNA unwinding element (DUE), permitting loading of DNA polymerase. After initiation quickly degrades to an ADP-DnaA complex that is not apt for DNA replication. Binds acidic phospholipids. The polypeptide is Chromosomal replication initiator protein DnaA (Wolbachia pipientis wMel).